The primary structure comprises 370 residues: Protein rough sheath 2 (370 aa).

HTH myb-type domains lie at 1 to 53 and 54 to 108; these read MKER…KNYL and RPGI…EKQQ. DNA-binding regions (H-T-H motif) lie at residues 27–53 and 81–104; these read WHLV…KNYL and WKKI…EVFK. The interval 107 to 129 is disordered; sequence QQRELRDSRRPPPEPSPDERGRY. Residues 276-340 are a coiled coil; that stretch reads KRVEQQLEME…QVKEEKMAEQ (65 aa).

In terms of assembly, homodimer. Interacts with AS2, WRKY1, HIRA, a probable histone chaperone, and RIK, a predicted RNA binding protein. As to expression, expressed in lateral organ promordia.

The protein localises to the nucleus. Functionally, transcription factor required for normal cell differentiation. Interacts directly with asymmetric leaves 2 (AS2) to repress the knox homeobox genes. The protein is Protein rough sheath 2 (RS2) of Zea mays (Maize).